Here is a 394-residue protein sequence, read N- to C-terminus: Protein TsgA homolog (394 aa).

12 helical membrane-spanning segments follow: residues 11-31, 51-71, 76-96, 101-121, 134-154, 162-182, 206-226, 246-266, 274-294, 302-322, 334-354, and 363-383; these read WISY…GIVM, FLNA…EIIP, LVFG…GHNL, ISMF…TFLV, LLFT…AAAM, WYWV…LTLC, VGVL…LGFI, QLVS…SFIL, IVTV…STDN, ILAL…LGSL, FILT…GPIV, and LATA…LGFF.

Belongs to the major facilitator superfamily. TsgA family.

The protein localises to the cell inner membrane. The chain is Protein TsgA homolog from Yersinia pseudotuberculosis serotype O:1b (strain IP 31758).